A 757-amino-acid polypeptide reads, in one-letter code: MNDCGSLFNKKLFKMNLLFKHLKLQQHLKLQQKPLLNNSSINNNINNNNNNNNNNNSNNDSNNTNTNIFNNSFLNSDLIERLIIKFTIGYLKNNITEDYIEQILLENQNNFIKSTTTSNYILEENNNNNNNNNNNNNNNNNNNNNNNNNNNNNNNNNSSSSSSSILSKFNKLEEDNELELQKKQKQQLEQQEEELFNQFNFLEGIEDQNDFLSEQETIQKIKFLIKMTAKSMSNYSSPNTLIPSVSKTYISPFGLSSNGSTNNHNNNNNNNHHHHSNNGNLIESSNNVNNQLNVSNYNNNNSNHYDENNQFDIFLIPTEMLVHLLSFLSANDLWRISLTCKRIWYIVDVFKFWELLFEQTCPRIYYAMQFNSRWSNPTSFQSKMILCYIDRLPTDNYKNFDKSDESGQIKKIIGVMNENLHNPMILRETCYILKRLSYRQRKEDEHESLIARYGGISLILQAMKNHPYDAGVQEDACGALGNLTCDSPNNMGLYSNDNYLSVVEQGGIQLILQAMKNHMMNPGVQYNTSFVLRNLARNDVSESRVAIEGGIQSIATAMKNHPNHIGIQTQGCGALRNLGCNDSNKVLSAKEGGIGLILRAMRSFSSHPDLQLNGCGALRNLARNEDNKNMISRQNGIQLVLGAMSNHPDDPDVQDEGCAALINLAYQDEANEETIAREGGINLILKAMRNHPFHSGVQMQGRGALKNLSCNPKNKLTIARSGGIELMNIAMQNHPNFANRFLELSRILQVALEDGNI.

3 disordered regions span residues 39-63 (SSINNNINNNNNNNNNNNSNNDSNN), 122-166 (LEEN…SSIL), and 256-285 (SSNGSTNNHNNNNNNNHHHHSNNGNLIESS). Residues 121–205 (ILEENNNNNN…FNQFNFLEGI (85 aa)) are a coiled coil. Low complexity-rich tracts occupy residues 125–164 (NNNNNNNNNNNNNNNNNNNNNNNNNNNNNNNNNSSSSSSS) and 256–270 (SSNGSTNNHNNNNNN). An F-box domain is found at 310–356 (QFDIFLIPTEMLVHLLSFLSANDLWRISLTCKRIWYIVDVFKFWELL). ARM repeat units lie at residues 454–498 (GGIS…SNDN), 506–548 (GGIQ…VAIE), 549–591 (GGIQ…SAKE), 592–634 (GGIG…ISRQ), 635–678 (NGIQ…IARE), and 679–723 (GGIN…RSGG).

Belongs to the beta-catenin family.

The protein resides in the cytoplasm. The protein localises to the cell junction. Required to regulate pattern formation during multi-cellular stages of development and for the formation of adherens junctions. Plays a structural role during the regulation of stalk formation. Involved in cell signaling. Required for spore-cell differentiation. Overexpression increases number and size of cell junctions and reduces spore-cell formation. The chain is Protein aardvark (aarA) from Dictyostelium discoideum (Social amoeba).